Consider the following 362-residue polypeptide: Prostaglandin F2-alpha receptor (362 aa).

Over 1–31 (MSTNSSIQPVSPESELLSNTTCQLEEDLSIS) the chain is Extracellular. N-linked (GlcNAc...) asparagine glycosylation is found at Asn-4 and Asn-19. The chain crosses the membrane as a helical span at residues 32–54 (FSIIFMTVGILSNSLAIAILMKA). The Cytoplasmic segment spans residues 55-69 (YQRFRQKYKSSFLLL). Residues 70–90 (ASALVITDFFGHLINGTIAVF) traverse the membrane as a helical segment. Residues 91–109 (VYASDKDWIYFDKSNILCS) lie on the Extracellular side of the membrane. Cys-108 and Cys-186 are joined by a disulfide. Residues 110-131 (IFGICMVFSGLCPLFLGSLMAI) traverse the membrane as a helical segment. At 132 to 152 (ERCIGVTKPIFHSTKITTKHV) the chain is on the cytoplasmic side. Residues 153–175 (KMMLSGVCFFAVFVALLPILGHR) form a helical membrane-spanning segment. Residues 176–198 (DYKIQASRTWCFYKTDEIKDWED) are Extracellular-facing. Residues 199-224 (RFYLLLFAFLGLLALGISFVCNAITG) traverse the membrane as a helical segment. At 225 to 250 (ISLLKVKFRSQQHRQGRSHHFEMVIQ) the chain is on the cytoplasmic side. A helical transmembrane segment spans residues 251 to 267 (LLGIMCVSCICWSPFLV). Residues 268–285 (TMASIGMNIQDFKDSCER) lie on the Extracellular side of the membrane. A helical membrane pass occupies residues 286 to 307 (TLFTLRMATWNQILDPWVYILL). Over 308-362 (RKAVLRNLYVCTRRCCGVHVISLHVWELSSIKDSLKVAAISDLPVTEKVTQQTST) the chain is Cytoplasmic.

The protein belongs to the G-protein coupled receptor 1 family.

The protein localises to the cell membrane. In terms of biological role, receptor for prostaglandin F2-alpha (PGF2-alpha). The activity of this receptor is mediated by G proteins which activate a phosphatidylinositol-calcium second messenger system. Initiates luteolysis in the corpus luteum. This chain is Prostaglandin F2-alpha receptor (PTGFR), found in Bos taurus (Bovine).